Here is a 364-residue protein sequence, read N- to C-terminus: RNA-binding protein ZC3H11 (364 aa).

The C3H1-type zinc-finger motif lies at 64-92 (RYKTKLCKNFVQYGTCPYDIRCMFAHGEE). The MKT1-binding motif motif lies at 194 to 199 (VRHNPY). The segment at 340–364 (EQSQSHLKREGNEGRGEGLHMFLSL) is disordered. Residues 346–357 (LKREGNEGRGEG) show a composition bias toward basic and acidic residues.

In terms of assembly, interacts (via MKT1-binding motif) with MKT1. Interacts with PBP1 (via C-terminus); the interaction is direct. Post-translationally, phosphorylated at the N-terminus. CK1.2-dependent phosphorylation may lead to proteasome-dependent degradation of ZC3H11 in absence of stress.

Its subcellular location is the cytoplasm. Functionally, RNA-binding protein involved in regulation of mRNA stability. Binds AU-rich regions in the 3'-UTR of mRNAs and promotes their stabilization by recruiting a MKT1-containing complex. Stabilizes chaperone mRNAs during stress that causes an accumulation of misfolded or unfolded proteins in the cytoplasm. The chain is RNA-binding protein ZC3H11 from Trypanosoma brucei brucei (strain 927/4 GUTat10.1).